The primary structure comprises 347 residues: NADH-quinone oxidoreductase subunit H (347 aa).

8 helical membrane passes run 21-41 (IAGI…IIYA), 87-107 (GLFL…WAVI), 120-140 (VGLL…VIAG), 160-180 (ISYE…AGTF), 194-214 (WIIN…MFLI), 259-279 (LLMC…PLDI), 282-302 (LYLV…FFIF), and 324-344 (VFLP…MATG).

Belongs to the complex I subunit 1 family. As to quaternary structure, NDH-1 is composed of 14 different subunits. Subunits NuoA, H, J, K, L, M, N constitute the membrane sector of the complex.

It localises to the cell inner membrane. It catalyses the reaction a quinone + NADH + 5 H(+)(in) = a quinol + NAD(+) + 4 H(+)(out). NDH-1 shuttles electrons from NADH, via FMN and iron-sulfur (Fe-S) centers, to quinones in the respiratory chain. The immediate electron acceptor for the enzyme in this species is believed to be ubiquinone. Couples the redox reaction to proton translocation (for every two electrons transferred, four hydrogen ions are translocated across the cytoplasmic membrane), and thus conserves the redox energy in a proton gradient. This subunit may bind ubiquinone. This Novosphingobium aromaticivorans (strain ATCC 700278 / DSM 12444 / CCUG 56034 / CIP 105152 / NBRC 16084 / F199) protein is NADH-quinone oxidoreductase subunit H.